An 80-amino-acid polypeptide reads, in one-letter code: Metallothionein-like protein type 2, MT2-4/MT2-25 (80 aa).

Belongs to the metallothionein superfamily. Type 15 family.

Metallothioneins have a high content of cysteine residues that bind various heavy metals. This Brassica juncea (Indian mustard) protein is Metallothionein-like protein type 2, MT2-4/MT2-25.